The following is a 211-amino-acid chain: Small ribosomal subunit protein uS3 (211 aa).

Residues 38-106 (LRNFLKKRLF…EIYLNIQEVR (69 aa)) form the KH type-2 domain.

This sequence belongs to the universal ribosomal protein uS3 family. In terms of assembly, part of the 30S ribosomal subunit. Forms a tight complex with proteins S10 and S14.

In terms of biological role, binds the lower part of the 30S subunit head. Binds mRNA in the 70S ribosome, positioning it for translation. The chain is Small ribosomal subunit protein uS3 from Geobacter metallireducens (strain ATCC 53774 / DSM 7210 / GS-15).